We begin with the raw amino-acid sequence, 348 residues long: MNRTDELRTARIESLVTPAELALRYPVTPGVATHVTDSRRRIEKILNGEDKRLLVIIGPCSIHDLTAAMEYATRLQSLRNQYQSRLEIVMRTYFEKPRTVVGWKGLISDPDLNGSYRVNHGLELARKLLLQVNELGVPTATEFLDMVTGQFIADLISWGAIGARTTESQIHREMASALSCPVGFKNGTDGNTRIAVDAIRAARASHMFLSPDKNGQMTIYQTSGNPYGHIIMRGGKKPNYHADDIAAACDTLHEFDLPEHLVVDFSHGNCQKQHRRQLEVCEDICQQIRNGSTEIAGIMAESFLREGTQKIVGGQPLTYGQSITDPCLGWEDTERLVEKLAFAVDTRF.

It belongs to the class-I DAHP synthase family.

It carries out the reaction D-erythrose 4-phosphate + phosphoenolpyruvate + H2O = 7-phospho-2-dehydro-3-deoxy-D-arabino-heptonate + phosphate. It participates in metabolic intermediate biosynthesis; chorismate biosynthesis; chorismate from D-erythrose 4-phosphate and phosphoenolpyruvate: step 1/7. Stereospecific condensation of phosphoenolpyruvate (PEP) and D-erythrose-4-phosphate (E4P) giving rise to 3-deoxy-D-arabino-heptulosonate-7-phosphate (DAHP). This chain is Phospho-2-dehydro-3-deoxyheptonate aldolase, Trp-sensitive (aroH), found in Shigella flexneri.